A 600-amino-acid chain; its full sequence is Kelch-like protein 24 (600 aa).

Residues 66-133 enclose the BTB domain; sequence TDVIICVEGK…VYTGKVKITT (68 aa). The region spanning 168–270 is the BACK domain; the sequence is CLGIQRFADT…HPNYFVQTVE (103 aa). 6 Kelch repeats span residues 314-363, 365-407, 408-454, 456-502, 504-544, and 546-592; these read VIVV…ALRN, ILVS…VLLG, KVYV…SCIG, LFVI…SLNN, IYVA…VCNG, and IYIL…TIHR.

Forms homodimers. Interacts with GRIK2. Component of the BCR(KLHL24) E3 ubiquitin ligase complex, composed of CUL3, RBX1 and KLHL24. Interacts with CUL3. Interacts with KRT14. In terms of processing, autoubiquitinated. Autoubiquitination leads to proteasomal degradation and is necessary to control KLHL24 levels. In terms of tissue distribution, expressed in the brain.

It localises to the perikaryon. It is found in the cell projection. The protein localises to the axon. Its subcellular location is the cytoplasm. The protein resides in the cell junction. It localises to the desmosome. It is found in the adherens junction. Its function is as follows. Controls KRT14 levels during keratinocytes differentiation. As part of the BCR(KLHL24) E3 ubiquitin ligase complex, mediates ubiquitination of KRT14. Specifically reduces kainate receptor-mediated currents in hippocampal neurons, most probably by modulating channel properties. Has a crucial role in cardiac development and function. The polypeptide is Kelch-like protein 24 (Klhl24) (Mus musculus (Mouse)).